Here is a 118-residue protein sequence, read N- to C-terminus: NADH-quinone oxidoreductase subunit A (118 aa).

Helical transmembrane passes span 6–26 (LPVL…LLMG), 64–84 (AILF…AVVF), and 87–107 (IGMT…VGFI).

This sequence belongs to the complex I subunit 3 family. As to quaternary structure, NDH-1 is composed of 14 different subunits. Subunits NuoA, H, J, K, L, M, N constitute the membrane sector of the complex.

The protein localises to the cell inner membrane. The enzyme catalyses a quinone + NADH + 5 H(+)(in) = a quinol + NAD(+) + 4 H(+)(out). In terms of biological role, NDH-1 shuttles electrons from NADH, via FMN and iron-sulfur (Fe-S) centers, to quinones in the respiratory chain. The immediate electron acceptor for the enzyme in this species is believed to be ubiquinone. Couples the redox reaction to proton translocation (for every two electrons transferred, four hydrogen ions are translocated across the cytoplasmic membrane), and thus conserves the redox energy in a proton gradient. This Acidithiobacillus ferrooxidans (strain ATCC 53993 / BNL-5-31) (Leptospirillum ferrooxidans (ATCC 53993)) protein is NADH-quinone oxidoreductase subunit A.